The sequence spans 704 residues: Acetate--CoA ligase [ADP-forming] (704 aa).

In the N-terminal section; belongs to the acetate CoA ligase alpha subunit family. It in the C-terminal section; belongs to the acetate CoA ligase beta subunit family. As to quaternary structure, homodimer.

It carries out the reaction acetate + ATP + CoA = acetyl-CoA + ADP + phosphate. Catalyzes the formation of acetate and ATP from acetyl-CoA by using ADP and phosphate. Can also use butyryl-CoA, but not phenylacetyl-CoA. Cannot catalyze the reverse reaction. In Methanocaldococcus jannaschii (strain ATCC 43067 / DSM 2661 / JAL-1 / JCM 10045 / NBRC 100440) (Methanococcus jannaschii), this protein is Acetate--CoA ligase [ADP-forming].